The chain runs to 230 residues: 3,4-dihydroxy-2-butanone 4-phosphate synthase (230 aa).

Residues 42 to 43, Asp47, 155 to 159, and Glu179 contribute to the D-ribulose 5-phosphate site; these read RE and RRGHT. Residue Glu43 coordinates Mg(2+). Mg(2+) is bound at residue His158.

The protein belongs to the DHBP synthase family. Homodimer. Mg(2+) is required as a cofactor. Requires Mn(2+) as cofactor.

The enzyme catalyses D-ribulose 5-phosphate = (2S)-2-hydroxy-3-oxobutyl phosphate + formate + H(+). It participates in cofactor biosynthesis; riboflavin biosynthesis; 2-hydroxy-3-oxobutyl phosphate from D-ribulose 5-phosphate: step 1/1. Functionally, catalyzes the conversion of D-ribulose 5-phosphate to formate and 3,4-dihydroxy-2-butanone 4-phosphate. The chain is 3,4-dihydroxy-2-butanone 4-phosphate synthase from Bordetella pertussis (strain Tohama I / ATCC BAA-589 / NCTC 13251).